The primary structure comprises 452 residues: tRNA-2-methylthio-N(6)-dimethylallyladenosine synthase (452 aa).

The 116-residue stretch at 3–118 (KKVFIKTYGC…LPQLLAERER (116 aa)) folds into the MTTase N-terminal domain. [4Fe-4S] cluster is bound by residues C12, C49, C81, C155, C159, and C162. Residues 141 to 379 (RVEGASAFVS…QTVINDSIKR (239 aa)) form the Radical SAM core domain. In terms of domain architecture, TRAM spans 382 to 445 (ESRLGTVQRI…SFTLRGEVVT (64 aa)).

Belongs to the methylthiotransferase family. MiaB subfamily. In terms of assembly, monomer. [4Fe-4S] cluster serves as cofactor.

The protein localises to the cytoplasm. The enzyme catalyses N(6)-dimethylallyladenosine(37) in tRNA + (sulfur carrier)-SH + AH2 + 2 S-adenosyl-L-methionine = 2-methylsulfanyl-N(6)-dimethylallyladenosine(37) in tRNA + (sulfur carrier)-H + 5'-deoxyadenosine + L-methionine + A + S-adenosyl-L-homocysteine + 2 H(+). Catalyzes the methylthiolation of N6-(dimethylallyl)adenosine (i(6)A), leading to the formation of 2-methylthio-N6-(dimethylallyl)adenosine (ms(2)i(6)A) at position 37 in tRNAs that read codons beginning with uridine. This Albidiferax ferrireducens (strain ATCC BAA-621 / DSM 15236 / T118) (Rhodoferax ferrireducens) protein is tRNA-2-methylthio-N(6)-dimethylallyladenosine synthase.